Here is a 720-residue protein sequence, read N- to C-terminus: Protein-glutamine gamma-glutamyltransferase 5 (720 aa).

Ala2 is subject to N-acetylalanine. Residues Cys278, His337, and Asp360 contribute to the active site. Ca(2+) contacts are provided by Asn400, Asp402, Glu448, and Glu453. Residues 470 to 499 (HGSQRGAELQPSRPTSLSQDSPRSLHTPSL) form a disordered region. A compositionally biased stretch (polar residues) spans 481–496 (SRPTSLSQDSPRSLHT).

This sequence belongs to the transglutaminase superfamily. Transglutaminase family. Ca(2+) serves as cofactor. As to expression, expressed in foreskin keratinocytes.

It localises to the cytoplasm. The enzyme catalyses L-glutaminyl-[protein] + L-lysyl-[protein] = [protein]-L-lysyl-N(6)-5-L-glutamyl-[protein] + NH4(+). Functionally, catalyzes the cross-linking of proteins and the conjugation of polyamines to proteins. Contributes to the formation of the cornified cell envelope of keratinocytes. The polypeptide is Protein-glutamine gamma-glutamyltransferase 5 (TGM5) (Homo sapiens (Human)).